A 459-amino-acid chain; its full sequence is tRNA modification GTPase MnmE (459 aa).

3 residues coordinate (6S)-5-formyl-5,6,7,8-tetrahydrofolate: Arg24, Glu82, and Lys122. The 161-residue stretch at 219-379 (GIKVVISGAP…LRQHLYFSFK (161 aa)) folds into the TrmE-type G domain. GTP contacts are provided by residues 229-234 (NSGKSS), 248-254 (TNFPGTT), and 273-276 (DTAG). Positions 233 and 254 each coordinate Mg(2+). Lys459 contacts (6S)-5-formyl-5,6,7,8-tetrahydrofolate.

This sequence belongs to the TRAFAC class TrmE-Era-EngA-EngB-Septin-like GTPase superfamily. TrmE GTPase family. In terms of assembly, homodimer. Heterotetramer of two MnmE and two MnmG subunits. K(+) serves as cofactor.

Its subcellular location is the cytoplasm. In terms of biological role, exhibits a very high intrinsic GTPase hydrolysis rate. Involved in the addition of a carboxymethylaminomethyl (cmnm) group at the wobble position (U34) of certain tRNAs, forming tRNA-cmnm(5)s(2)U34. The polypeptide is tRNA modification GTPase MnmE (Buchnera aphidicola subsp. Baizongia pistaciae (strain Bp)).